Consider the following 512-residue polypeptide: FAD-dependent monooxygenase prx3 (512 aa).

Positions 1-19 (MLSLKAFLALSLSIHLSQG) are cleaved as a signal peptide. The region spanning 63-235 (CQTTPTCVFA…TRFDLATFSV (173 aa)) is the FAD-binding PCMH-type domain. H100 is modified (pros-8alpha-FAD histidine). Residues N197, N281, N307, N329, N361, and N477 are each glycosylated (N-linked (GlcNAc...) asparagine).

It belongs to the oxygen-dependent FAD-linked oxidoreductase family.

It functions in the pathway sesquiterpene biosynthesis. Its function is as follows. FAD-dependent monooxygenase; part of the gene cluster that mediates the biosynthesis of PR-toxin, a bicyclic sesquiterpene belonging to the eremophilane class and acting as a mycotoxin. The first step of the pathway is catalyzed by the aristolochene synthase which performs the cyclization of trans,trans-farnesyl diphosphate (FPP) to the bicyclic sesquiterpene aristolochene. Following the formation of aristolochene, the non-oxygenated aristolochene is converted to the trioxygenated intermediate eremofortin B, via 7-epi-neopetasone. This conversion appears to involve three enzymes, a hydroxysterol oxidase-like enzyme, the quinone-oxidase prx3 that forms the quinone-type-structure in the bicyclic nucleus of aristolochene with the C8-oxo group and the C-3 hydroxyl group, and the P450 monooxygenase ORF6 that introduces the epoxide at the double bond between carbons 1 and 2. No monoxy or dioxy-intermediates have been reported to be released to the broth, so these three early oxidative reactions may be coupled together. Eremofortin B is further oxidized by another P450 monooxygenase, that introduces a second epoxide between carbons 7 and 11 prior to acetylation to eremofortin A by the acetyltransferase ORF8. The second epoxidation may be performed by a second P450 monooxygenase. After the acetylation step, eremofortin A is converted to eremofortin C and then to PR-toxin. First the conversion of eremofortin A to eremofortin C proceeds by oxidation of the side chain of the molecule at C-12 and is catalyzed by the short-chain oxidoreductase prx1. The cytochrome P450 monooxygenase ORF6 is probably also involved in this step. The primary alcohol formed at C-12 is finally oxidized by the short-chain alcohol dehydrogenase prx4 that forms PR-toxin. The sequence is that of FAD-dependent monooxygenase prx3 from Penicillium roqueforti (strain FM164).